The chain runs to 138 residues: Protein FAM136A (138 aa).

Belongs to the FAM136 family.

The chain is Protein FAM136A (fam136a) from Xenopus laevis (African clawed frog).